A 771-amino-acid chain; its full sequence is Protein translocase subunit SecA 2 (771 aa).

Residues glutamine 91, 109–113 (GEGKT), and aspartate 496 contribute to the ATP site.

This sequence belongs to the SecA family. In terms of assembly, monomer and homodimer. Part of the essential Sec protein translocation apparatus which comprises SecA, SecYEG and auxiliary proteins SecDF. Other proteins may also be involved.

It localises to the cell membrane. The protein localises to the cytoplasm. The enzyme catalyses ATP + H2O + cellular proteinSide 1 = ADP + phosphate + cellular proteinSide 2.. Its function is as follows. Part of the Sec protein translocase complex. Interacts with the SecYEG preprotein conducting channel. Has a central role in coupling the hydrolysis of ATP to the transfer of proteins into and across the cell membrane, serving as an ATP-driven molecular motor driving the stepwise translocation of polypeptide chains across the membrane. This is Protein translocase subunit SecA 2 from Corynebacterium jeikeium (strain K411).